Consider the following 411-residue polypeptide: MIAEKVLFLVLDGISDRPCEALDGLTPLAAARTPVLDRLAAEGVCGIMDSVAPGIRPGSDTSHLALLGYPPQEFYTGRGPLEAEGTGIHMTAGMIGFRCNFATVDADGLVTDRRAGRISGTEPLAEAIREGVDLSGLGLEFRFEAGAGHRAALALIGEGLGDKVSSNDPKKEGVQPLTIRPGSDDPADAKTARACNEFIRQSREILDGHPVNVRRMEEGLPPGNLLLIRGAGKMGALPQFPERYGLSGSVISAATLISGIGMVVGLEHIPVPGTTGSVDSDLDAKVRAAIGELGRKDFVLMNIKGADEAGHDGKSIQKRDFIEVIDKALAPLLDLKNTLILVCADHSTPCSVKDHSADPVPVVIRGPGVRIDRTNRFDEVSCAEGGLHRIRGRDLMPIILDLINKSHKYGA.

Residues Val164–Lys190 form a disordered region.

This sequence belongs to the BPG-independent phosphoglycerate mutase family. A-PGAM subfamily.

The catalysed reaction is (2R)-2-phosphoglycerate = (2R)-3-phosphoglycerate. The protein operates within carbohydrate degradation; glycolysis; pyruvate from D-glyceraldehyde 3-phosphate: step 3/5. In terms of biological role, catalyzes the interconversion of 2-phosphoglycerate and 3-phosphoglycerate. The chain is 2,3-bisphosphoglycerate-independent phosphoglycerate mutase from Methanoculleus marisnigri (strain ATCC 35101 / DSM 1498 / JR1).